Consider the following 530-residue polypeptide: UDP-glucuronosyltransferase 1A8 (530 aa).

The N-terminal stretch at 1 to 25 (MARTGWTSPIPLCVSLLLTCGFAEA) is a signal peptide. Asparagine 71, asparagine 292, and asparagine 344 each carry an N-linked (GlcNAc...) asparagine glycan. A helical transmembrane segment spans residues 488–504 (VIGFLLAVVLTVAFITF).

Belongs to the UDP-glycosyltransferase family. As to quaternary structure, homodimer. Homooligomer. Interacts with UGT1A1, UGT1A3, UGT1A4, UGT1A6, UGT1A7, UGT1A9 and UGT1A10 to form heterodimers. Isoform 1 interacts with isoform 2/i2 suggesting that oligomerization is involved in negative regulation of transferase activity by isoform 2. Isoform 1 also interacts with respective i2 isoforms of UGT1A1, UGT1A3, UGT1A4, UGT1A6, UGT1A7, UGT1A9 and UGT1A10. As to expression, expressed in kidney, colon and small intestine. Not expressed in liver. In terms of tissue distribution, expressed in liver, kidney, colon and small intestine.

It is found in the endoplasmic reticulum membrane. It catalyses the reaction glucuronate acceptor + UDP-alpha-D-glucuronate = acceptor beta-D-glucuronoside + UDP + H(+). The catalysed reaction is 17beta-estradiol + UDP-alpha-D-glucuronate = 17beta-estradiol 3-O-(beta-D-glucuronate) + UDP + H(+). It carries out the reaction 17alpha-estradiol + UDP-alpha-D-glucuronate = 17alpha-estradiol 3-O-(beta-D-glucuronate) + UDP + H(+). The enzyme catalyses estrone + UDP-alpha-D-glucuronate = estrone 3-O-(beta-D-glucuronate) + UDP + H(+). It catalyses the reaction 16alpha,17alpha-estriol + UDP-alpha-D-glucuronate = 16alpha,17alpha-estriol 3-O-(beta-D-glucuronate) + UDP + H(+). The catalysed reaction is 2-hydroxy-17beta-estradiol + UDP-alpha-D-glucuronate = 2-hydroxy-17beta-estradiol 3-O-(beta-D-glucuronate) + UDP + H(+). It carries out the reaction 2-hydroxy-17beta-estradiol + UDP-alpha-D-glucuronate = 17beta-estradiol 2-O-(beta-D-glucuronate) + UDP + H(+). The enzyme catalyses 2-hydroxyestrone + UDP-alpha-D-glucuronate = 2-hydroxyestrone 3-O-(beta-D-glucuronate) + UDP + H(+). It catalyses the reaction 4-hydroxy-17beta-estradiol + UDP-alpha-D-glucuronate = 4-hydroxy-17beta-estradiol 3-O-(beta-D-glucuronate) + UDP + H(+). The catalysed reaction is 4-hydroxy-17beta-estradiol + UDP-alpha-D-glucuronate = 17beta-estradiol 4-O-(beta-D-glucuronate) + UDP + H(+). It carries out the reaction 4-hydroxyestrone + UDP-alpha-D-glucuronate = 4-hydroxyestrone 3-O-(beta-D-glucuronate) + UDP + H(+). The enzyme catalyses 4-hydroxyestrone + UDP-alpha-D-glucuronate = estrone 4-O-(beta-D-glucuronate) + UDP + H(+). It catalyses the reaction 2-methoxy-17beta-estradiol + UDP-alpha-D-glucuronate = 2-methoxy-17beta-estradiol 3-O-(beta-D-glucuronate) + UDP + H(+). The catalysed reaction is 2-methoxyestrone + UDP-alpha-D-glucuronate = 2-methoxyestrone 3-O-(beta-D-glucuronate) + UDP + H(+). It carries out the reaction 4-methoxy-17beta-estradiol + UDP-alpha-D-glucuronate = 4-methoxy-17beta-estradiol 3-O-(beta-D-glucuronate) + UDP + H(+). The enzyme catalyses 4-methoxyestrone + UDP-alpha-D-glucuronate = 4-methoxyestrone 3-O-(beta-D-glucuronate) + UDP + H(+). It catalyses the reaction 17beta-hydroxy-5alpha-androstan-3-one + UDP-alpha-D-glucuronate = 5alpha-dihydrotestosterone 17-O-(beta-D-glucuronate) + UDP + H(+). The catalysed reaction is 5alpha-dihydrotestosterone 17-O-(beta-D-glucuronate) + UDP-alpha-D-glucuronate = 5alpha-dihydrotestosterone 17-O-[beta-D-glucuronosyl-(1-&gt;2)-glucuronate] + UDP + H(+). It carries out the reaction prunetin + UDP-alpha-D-glucuronate = prunetin-4'-O-beta-D-glucuronide + UDP. The enzyme catalyses prunetin + UDP-alpha-D-glucuronate = prunetin-5-O-beta-D-glucuronide + UDP. It catalyses the reaction candesartan + UDP-alpha-D-glucuronate = candesartan O-beta-D-glucuronoside + UDP. The catalysed reaction is mycophenolate + UDP-alpha-D-glucuronate = mycophenolate 7-O-beta-D-glucuronide + UDP + H(+). It carries out the reaction (E)-ferulate + UDP-alpha-D-glucuronate = (E)-4-O-(beta-D-glucuronosyl)-ferulate + UDP + H(+). The enzyme catalyses (E)-ferulate + UDP-alpha-D-glucuronate = (E)-ferulic acid beta-D-glucuronate ester + UDP. In terms of biological role, UDP-glucuronosyltransferase (UGT) that catalyzes phase II biotransformation reactions in which lipophilic substrates are conjugated with glucuronic acid to increase the metabolite's water solubility, thereby facilitating excretion into either the urine or bile. Essential for the elimination and detoxification of drugs, xenobiotics and endogenous compounds. Catalyzes the glucuronidation of endogenous steroid hormones such as androgens and estrogens. Produces dihydrotestosterone (DHT) diglucuronide from the DHT after two subsequent glucoronidation steps. Involved in the glucuronidation of the phytochemical ferulic acid at the phenolic or the carboxylic acid group. Also catalyzes the glucuronidation of the isoflavones genistein, daidzein, glycitein, formononetin, biochanin A and prunetin, which are phytoestrogens with anticancer and cardiovascular properties. Involved in the glucuronidation of the AGTR1 angiotensin receptor antagonist caderastan, a drug which can inhibit the effect of angiotensin II. Also metabolizes mycophenolate, an immunosuppressive agent. Its function is as follows. Lacks UGT glucuronidation activity but acts as a negative regulator of isoform 1. This Homo sapiens (Human) protein is UDP-glucuronosyltransferase 1A8.